Consider the following 247-residue polypeptide: ATP synthase subunit a, chloroplastic (247 aa).

The next 5 helical transmembrane spans lie at 38 to 58 (QVLI…FIAV), 95 to 115 (VPFI…GALL), 134 to 154 (INTT…AGLS), 199 to 219 (LVVV…VMFL), and 220 to 240 (GLFT…AYIG).

The protein belongs to the ATPase A chain family. In terms of assembly, F-type ATPases have 2 components, CF(1) - the catalytic core - and CF(0) - the membrane proton channel. CF(1) has five subunits: alpha(3), beta(3), gamma(1), delta(1), epsilon(1). CF(0) has four main subunits: a, b, b' and c.

The protein resides in the plastid. It is found in the chloroplast thylakoid membrane. In terms of biological role, key component of the proton channel; it plays a direct role in the translocation of protons across the membrane. The chain is ATP synthase subunit a, chloroplastic from Citrus sinensis (Sweet orange).